The primary structure comprises 151 residues: Nucleoside diphosphate kinase (151 aa).

ATP is bound by residues K11, F59, R87, R104, and N114. The active-site Pros-phosphohistidine intermediate is H117.

The protein belongs to the NDK family. Homotrimer. Mg(2+) is required as a cofactor.

The enzyme catalyses a 2'-deoxyribonucleoside 5'-diphosphate + ATP = a 2'-deoxyribonucleoside 5'-triphosphate + ADP. It carries out the reaction a ribonucleoside 5'-diphosphate + ATP = a ribonucleoside 5'-triphosphate + ADP. In terms of biological role, major role in the synthesis of nucleoside triphosphates other than ATP. The ATP gamma phosphate is transferred to the NDP beta phosphate via a ping-pong mechanism, using a phosphorylated active-site intermediate. This Schizosaccharomyces pombe (strain 972 / ATCC 24843) (Fission yeast) protein is Nucleoside diphosphate kinase (ndk1).